The chain runs to 447 residues: UDP-glycosyltransferase 76E3 (447 aa).

UDP-alpha-D-glucose-binding positions include S269, 328-330 (APQ), 345-353 (HCGWNSTLE), and 367-370 (QGEQ).

This sequence belongs to the UDP-glycosyltransferase family.

This is UDP-glycosyltransferase 76E3 (UGT76E3) from Arabidopsis thaliana (Mouse-ear cress).